The chain runs to 565 residues: CTP synthase (565 aa).

The tract at residues Met1–Pro268 is amidoligase domain. CTP is bound at residue Ser14. Position 14 (Ser14) interacts with UTP. Ser15–Ile20 contributes to the ATP binding site. Tyr55 serves as a coordination point for L-glutamine. Residue Asp72 participates in ATP binding. Mg(2+) contacts are provided by Asp72 and Glu142. CTP-binding positions include Asp149–Glu151, Lys189–Gln194, and Lys225. Residues Lys189–Gln194 and Lys225 each bind UTP. Residues Pro301 to Glu543 form the Glutamine amidotransferase type-1 domain. Gly363 contacts L-glutamine. Cys390 serves as the catalytic Nucleophile; for glutamine hydrolysis. L-glutamine-binding positions include Leu391 to Gln394, Glu414, and Arg471. Active-site residues include His516 and Glu518. Positions Asp545–Met565 are disordered.

Belongs to the CTP synthase family. In terms of assembly, homotetramer.

It catalyses the reaction UTP + L-glutamine + ATP + H2O = CTP + L-glutamate + ADP + phosphate + 2 H(+). The enzyme catalyses L-glutamine + H2O = L-glutamate + NH4(+). It carries out the reaction UTP + NH4(+) + ATP = CTP + ADP + phosphate + 2 H(+). It participates in pyrimidine metabolism; CTP biosynthesis via de novo pathway; CTP from UDP: step 2/2. Allosterically activated by GTP, when glutamine is the substrate; GTP has no effect on the reaction when ammonia is the substrate. The allosteric effector GTP functions by stabilizing the protein conformation that binds the tetrahedral intermediate(s) formed during glutamine hydrolysis. Inhibited by the product CTP, via allosteric rather than competitive inhibition. In terms of biological role, catalyzes the ATP-dependent amination of UTP to CTP with either L-glutamine or ammonia as the source of nitrogen. Regulates intracellular CTP levels through interactions with the four ribonucleotide triphosphates. The protein is CTP synthase of Salinibacter ruber (strain DSM 13855 / M31).